The primary structure comprises 1938 residues: Myosin-13 (1938 aa).

The 50-residue stretch at 33–82 (DSKKACFVADNKEMYVKGMIQTRENDKVIVKTLDDRMLTLNNDQVFPMNP) folds into the Myosin N-terminal SH3-like domain. Positions 86-782 (DKIEDMAMMT…LLGLLEEMRD (697 aa)) constitute a Myosin motor domain. N6,N6,N6-trimethyllysine is present on lysine 130. Residue 179 to 186 (GESGAGKT) participates in ATP binding. Actin-binding stretches follow at residues 659-681 (LNKL…IPNE) and 761-775 (RFGN…GLLG). One can recognise an IQ domain in the interval 785–814 (LVTLMTSTQAVCRGYLMRVEFKKMMERRDS). Residues 843 to 1938 (LLKSAEAEKE…RDVGSQKMEE (1096 aa)) are a coiled coil. Positions 1917–1938 (AESQVNKLRAKSRDVGSQKMEE) are disordered. Positions 1927-1938 (KSRDVGSQKMEE) are enriched in basic and acidic residues.

It belongs to the TRAFAC class myosin-kinesin ATPase superfamily. Myosin family. Muscle myosin is a hexameric protein that consists of 2 heavy chain subunits (MHC), 2 alkali light chain subunits (MLC) and 2 regulatory light chain subunits (MLC-2). Specifically expressed in extraocular and laryngeal muscles.

The protein localises to the cytoplasm. The protein resides in the myofibril. Fast twitching myosin mediating the high-velocity and low-tension contractions of specific striated muscles. This is Myosin-13 (MYH13) from Homo sapiens (Human).